We begin with the raw amino-acid sequence, 1621 residues long: Ferredoxin-dependent glutamate synthase, chloroplastic (1621 aa).

The transit peptide at 1–57 directs the protein to the chloroplast; sequence MALQSAPKLLYSSPSPSVFSANERRVAFSDFVGLSKKRSRRRRIAGTFRNFPALSAV. Cysteine 105 acts as the Nucleophile in catalysis. Residues 105-504 form the Glutamine amidotransferase type-2 domain; sequence CGVGFIANLD…PGMMISVDLS (400 aa). Residue 1183–1240 coordinates FMN; the sequence is LSETHQTLISNGLRERVILRVDGGLKCGVDVMMAAAMGADEYGFGSLAMIATGCVMAR. Positions 1236, 1242, and 1247 each coordinate [3Fe-4S] cluster.

The protein belongs to the glutamate synthase family. In terms of assembly, interacts with ferredoxin. Interacts (via FMN-binding domain) with SQD1. [3Fe-4S] cluster serves as cofactor. Requires FMN as cofactor. Expressed in young leaves. Not detected in mature leaves.

It localises to the plastid. The protein localises to the chloroplast stroma. The catalysed reaction is 2 oxidized [2Fe-2S]-[ferredoxin] + 2 L-glutamate = L-glutamine + 2 reduced [2Fe-2S]-[ferredoxin] + 2-oxoglutarate + 2 H(+). It functions in the pathway amino-acid biosynthesis; L-glutamate biosynthesis via GLT pathway; L-glutamate from 2-oxoglutarate and L-glutamine (ferredoxin route): step 1/1. The protein operates within energy metabolism; nitrogen metabolism. With respect to regulation, inhibited by N-bromosuccinimide, which is specific for modification of tryptophan residues probably involved in the electron transfer from ferredoxin. Its function is as follows. Catalyzes the reductive conversion of 2-oxoglutarate plus glutamine to two molecules of glutamate, using reduced ferredoxin as the electron donor. Contains one FMN but no FAD. The FMN-binding domain is also involved in the delivery of sulfite to the reaction center of SQD1. This chain is Ferredoxin-dependent glutamate synthase, chloroplastic, found in Spinacia oleracea (Spinach).